The primary structure comprises 479 residues: Glutamyl-tRNA(Gln) amidotransferase subunit A (479 aa).

Active-site charge relay system residues include K71 and S146. S170 functions as the Acyl-ester intermediate in the catalytic mechanism.

The protein belongs to the amidase family. GatA subfamily. In terms of assembly, heterotrimer of A, B and C subunits.

The enzyme catalyses L-glutamyl-tRNA(Gln) + L-glutamine + ATP + H2O = L-glutaminyl-tRNA(Gln) + L-glutamate + ADP + phosphate + H(+). Its function is as follows. Allows the formation of correctly charged Gln-tRNA(Gln) through the transamidation of misacylated Glu-tRNA(Gln) in organisms which lack glutaminyl-tRNA synthetase. The reaction takes place in the presence of glutamine and ATP through an activated gamma-phospho-Glu-tRNA(Gln). The protein is Glutamyl-tRNA(Gln) amidotransferase subunit A of Lactobacillus acidophilus (strain ATCC 700396 / NCK56 / N2 / NCFM).